Consider the following 362-residue polypeptide: MKYIINNFNLFDLQAKLKNFLSKNYKNKYYKRIKQKIFSYINLCNDYYNGNFLLKDLIKKYFKNKFSTFYYWANKILIAYKSNDFAELLLKSTIPNNINYQYSNDVRQNICDLYFKYCNKHAGGVLSLFYNLKKGIHGEELKNKAPKNLKTFFRWLKKDERWLKIKNKIKEIKKQHSRYEVKEIGLLQMDAKYFVPSKFSVDKKYYVYDFIDEKTRLALGYVYDKLSTDNAIDAVKKAISDFKNIFGIIITRIRTDNGSEFINNYRNNQKISVKKTNFTQFLTDKNILHQTTPVRSPQSNGKIERFHQNYTKLFVFEEKILNAVSLQNKLNDYYYFYNFERVHKSLNFQTPFNFLNSLSLIK.

One can recognise an Integrase catalytic domain in the interval 179–359 (YEVKEIGLLQ…TPFNFLNSLS (181 aa)). 2 residues coordinate Mg(2+): Asp-190 and Asp-256.

It belongs to the plectrovirus integrase ORF3 family.

Functionally, this protein may encode an integrase, which is necessary for integration of the viral DNA into host genome. This is Putative integrase ORF3 from Spiroplasma melliferum (SpV1).